The following is a 71-amino-acid chain: Small ribosomal subunit protein bS21 (71 aa).

Positions 37–71 (HYEKPTQERKRKAAAAVKRHMKRLSREQARRRRLY) are disordered. The segment covering 45 to 71 (RKRKAAAAVKRHMKRLSREQARRRRLY) has biased composition (basic residues).

The protein belongs to the bacterial ribosomal protein bS21 family.

The polypeptide is Small ribosomal subunit protein bS21 (Alkalilimnicola ehrlichii (strain ATCC BAA-1101 / DSM 17681 / MLHE-1)).